A 185-amino-acid chain; its full sequence is GTP cyclohydrolase 1 (185 aa).

Positions 76, 79, and 147 each coordinate Zn(2+).

This sequence belongs to the GTP cyclohydrolase I family. As to quaternary structure, toroid-shaped homodecamer, composed of two pentamers of five dimers.

It catalyses the reaction GTP + H2O = 7,8-dihydroneopterin 3'-triphosphate + formate + H(+). Its pathway is cofactor biosynthesis; 7,8-dihydroneopterin triphosphate biosynthesis; 7,8-dihydroneopterin triphosphate from GTP: step 1/1. This Clostridium perfringens (strain ATCC 13124 / DSM 756 / JCM 1290 / NCIMB 6125 / NCTC 8237 / Type A) protein is GTP cyclohydrolase 1.